The chain runs to 281 residues: Arabinooligosaccharides transport system permease protein AraQ (281 aa).

A run of 6 helical transmembrane segments spans residues 15–35, 81–101, 112–132, 142–162, 185–205, and 247–267; these read LTLFFMMLSLLYLFPIFCLLL, LVLGLFTTVLTLFFSSMIGYG, IIFVLVLIIMMVPLEVMMLPL, IDSYTGVILPFIVSPVAVFFF, FGIFFRIMAPLMKPAFGAMII, and MLISGSVFAILPVIIIFLFFQ. The ABC transmembrane type-1 domain occupies 77 to 266; it reads FFNSLVLGLF…LPVIIIFLFF (190 aa).

The protein belongs to the binding-protein-dependent transport system permease family. MalFG subfamily. As to quaternary structure, the complex is composed of two ATP-binding proteins (MsmX), two transmembrane proteins (AraP and AraQ) and a solute-binding protein (AraN).

The protein localises to the cell membrane. Its function is as follows. Part of the ABC transporter complex AraNPQ involved in the uptake of arabinooligosaccharides. Transports alpha-1,5-arabinooligosaccharides, at least up to four L-arabinosyl units. Responsible for the translocation of the substrate across the membrane. In Bacillus subtilis (strain 168), this protein is Arabinooligosaccharides transport system permease protein AraQ.